The primary structure comprises 125 residues: Glycine cleavage system H protein (125 aa).

One can recognise a Lipoyl-binding domain in the interval 19–101; it reads VAVVGISDYA…EGKGWFMKLK (83 aa). The residue at position 60 (Lys-60) is an N6-lipoyllysine.

Belongs to the GcvH family. In terms of assembly, the glycine cleavage system is composed of four proteins: P, T, L and H. The cofactor is (R)-lipoate.

The glycine cleavage system catalyzes the degradation of glycine. The H protein shuttles the methylamine group of glycine from the P protein to the T protein. The sequence is that of Glycine cleavage system H protein from Xanthobacter autotrophicus (strain ATCC BAA-1158 / Py2).